A 145-amino-acid chain; its full sequence is Large ribosomal subunit protein uL11 (145 aa).

Belongs to the universal ribosomal protein uL11 family. As to quaternary structure, part of the ribosomal stalk of the 50S ribosomal subunit. Interacts with L10 and the large rRNA to form the base of the stalk. L10 forms an elongated spine to which L12 dimers bind in a sequential fashion forming a multimeric L10(L12)X complex. Post-translationally, one or more lysine residues are methylated.

Functionally, forms part of the ribosomal stalk which helps the ribosome interact with GTP-bound translation factors. The polypeptide is Large ribosomal subunit protein uL11 (Rickettsia peacockii (strain Rustic)).